The following is a 381-amino-acid chain: Homoserine O-succinyltransferase (381 aa).

The 316-residue stretch at N45–D360 folds into the AB hydrolase-1 domain. Catalysis depends on S151, which acts as the Nucleophile. Residue R221 participates in substrate binding. Active-site residues include D321 and H354. D355 serves as a coordination point for substrate.

Belongs to the AB hydrolase superfamily. MetX family. Homodimer.

Its subcellular location is the cytoplasm. It catalyses the reaction L-homoserine + succinyl-CoA = O-succinyl-L-homoserine + CoA. The protein operates within amino-acid biosynthesis; L-methionine biosynthesis via de novo pathway; O-succinyl-L-homoserine from L-homoserine: step 1/1. In terms of biological role, transfers a succinyl group from succinyl-CoA to L-homoserine, forming succinyl-L-homoserine. This is Homoserine O-succinyltransferase from Burkholderia thailandensis (strain ATCC 700388 / DSM 13276 / CCUG 48851 / CIP 106301 / E264).